The sequence spans 149 residues: Potassium binding protein Kbp (149 aa).

Positions 23–91 (DKDDQAKKVQ…SVDDQVKTAT (69 aa)) constitute a BON domain. One can recognise a LysM domain in the interval 97–146 (QFYTVKSGDTLSAISKQVYGNANLYNKIFEANKPMLKSPDKIYPGQVLRI).

It is found in the cytoplasm. Its function is as follows. Highly specific potassium binding protein that is required for normal growth in the presence of high levels of external K(+). May act as a sensor of cytoplasmic K(+) concentration. In Escherichia coli O6:H1 (strain CFT073 / ATCC 700928 / UPEC), this protein is Potassium binding protein Kbp.